Reading from the N-terminus, the 210-residue chain is Glycerol-3-phosphate acyltransferase (210 aa).

Transmembrane regions (helical) follow at residues 10–30 (ALILTGVLGYLLGSIPFGIVI), 59–79 (PAALATLLLDSGKGAIAVLIA), 87–107 (AAQLAAFTSFLGHLYPVWLGF), 116–136 (FLGTLIALAWPVGLACCLTWL), and 161–181 (LLLGQGQMAALGLVLAVLIFI).

The protein belongs to the PlsY family. Probably interacts with PlsX.

The protein localises to the cell inner membrane. The catalysed reaction is an acyl phosphate + sn-glycerol 3-phosphate = a 1-acyl-sn-glycero-3-phosphate + phosphate. It participates in lipid metabolism; phospholipid metabolism. Catalyzes the transfer of an acyl group from acyl-phosphate (acyl-PO(4)) to glycerol-3-phosphate (G3P) to form lysophosphatidic acid (LPA). This enzyme utilizes acyl-phosphate as fatty acyl donor, but not acyl-CoA or acyl-ACP. This Cereibacter sphaeroides (strain ATCC 17025 / ATH 2.4.3) (Rhodobacter sphaeroides) protein is Glycerol-3-phosphate acyltransferase.